We begin with the raw amino-acid sequence, 344 residues long: Methionine import ATP-binding protein MetN (344 aa).

One can recognise an ABC transporter domain in the interval 2–241 (IELKNIGKQF…PTTQLAQQFI (240 aa)). ATP is bound at residue 38 to 45 (GASGAGKS).

The protein belongs to the ABC transporter superfamily. Methionine importer (TC 3.A.1.24) family. The complex is composed of two ATP-binding proteins (MetN), two transmembrane proteins (MetI) and a solute-binding protein (MetQ).

It is found in the cell inner membrane. The enzyme catalyses L-methionine(out) + ATP + H2O = L-methionine(in) + ADP + phosphate + H(+). The catalysed reaction is D-methionine(out) + ATP + H2O = D-methionine(in) + ADP + phosphate + H(+). Its function is as follows. Part of the ABC transporter complex MetNIQ involved in methionine import. Responsible for energy coupling to the transport system. The polypeptide is Methionine import ATP-binding protein MetN (Haemophilus ducreyi (strain 35000HP / ATCC 700724)).